Reading from the N-terminus, the 102-residue chain is Large ribosomal subunit protein bL21 (102 aa).

The protein belongs to the bacterial ribosomal protein bL21 family. In terms of assembly, part of the 50S ribosomal subunit. Contacts protein L20.

This protein binds to 23S rRNA in the presence of protein L20. The chain is Large ribosomal subunit protein bL21 from Marinomonas sp. (strain MWYL1).